The following is a 298-amino-acid chain: MTKQTEYKRKPEWLKIKLNTNENYTGLKKMMRSKNLHTVCEEAKCPNIHECWAVRKTATFMILGAVCTRACRFCAVKTGLPTELDLQEPERVADSVVQMGLKHVVITAVARDDLKDGGAAVFAETVRAVRRKNPFTSIEVLPSDMAGVEENLKMLMDAKPDILNHNIETVRRLSNRVRARAKYDRSLEFLRRAKEMQPDIPTKSSIMVGLGETREDLIEAMDDLRANNVDILTLGQYLQPSKKHLPVIKYYPPAEFAELKEIALSKGFSHCEAGPLVRSSYHADEQVRSAKEKTAEAK.

Residues Cys-40, Cys-45, Cys-51, Cys-67, Cys-71, Cys-74, and Ser-280 each coordinate [4Fe-4S] cluster. The region spanning 53 to 269 (AVRKTATFMI…KEIALSKGFS (217 aa)) is the Radical SAM core domain.

It belongs to the radical SAM superfamily. Lipoyl synthase family. [4Fe-4S] cluster is required as a cofactor.

Its subcellular location is the cytoplasm. The enzyme catalyses [[Fe-S] cluster scaffold protein carrying a second [4Fe-4S](2+) cluster] + N(6)-octanoyl-L-lysyl-[protein] + 2 oxidized [2Fe-2S]-[ferredoxin] + 2 S-adenosyl-L-methionine + 4 H(+) = [[Fe-S] cluster scaffold protein] + N(6)-[(R)-dihydrolipoyl]-L-lysyl-[protein] + 4 Fe(3+) + 2 hydrogen sulfide + 2 5'-deoxyadenosine + 2 L-methionine + 2 reduced [2Fe-2S]-[ferredoxin]. The protein operates within protein modification; protein lipoylation via endogenous pathway; protein N(6)-(lipoyl)lysine from octanoyl-[acyl-carrier-protein]. Functionally, catalyzes the radical-mediated insertion of two sulfur atoms into the C-6 and C-8 positions of the octanoyl moiety bound to the lipoyl domains of lipoate-dependent enzymes, thereby converting the octanoylated domains into lipoylated derivatives. The sequence is that of Lipoyl synthase from Bacillus cereus (strain G9842).